The chain runs to 1375 residues: DNA-directed RNA polymerase subunit beta' (1375 aa).

A unknown region spans residues 1–158 (MAKNEVLSLP…RVNKIIQPIR (158 aa)). Positions 159-1353 (KTYGSKAFTH…GGLIPAGTGI (1195 aa)) are DNA-directed RNA polymerase subunit beta'. C219, C221, C233, and C236 together coordinate Zn(2+). Mg(2+) is bound by residues D607, D609, and D611.

It belongs to the RNA polymerase beta' chain family. The RNAP catalytic core consists of 2 alpha, 1 beta, 1 beta' and 1 omega subunit. When a sigma factor is associated with the core the holoenzyme is formed, which can initiate transcription. Mg(2+) serves as cofactor. Zn(2+) is required as a cofactor.

It carries out the reaction RNA(n) + a ribonucleoside 5'-triphosphate = RNA(n+1) + diphosphate. In terms of biological role, DNA-dependent RNA polymerase catalyzes the transcription of DNA into RNA using the four ribonucleoside triphosphates as substrates. This chain is DNA-directed RNA polymerase subunit beta', found in Acholeplasma laidlawii (strain PG-8A).